The primary structure comprises 232 residues: Orotate phosphoribosyltransferase (232 aa).

Residues Arg-107, Lys-108, Lys-111, His-113, and 133-141 (EDLTTAGGS) contribute to the 5-phospho-alpha-D-ribose 1-diphosphate site. Thr-137 contacts orotate.

It belongs to the purine/pyrimidine phosphoribosyltransferase family. PyrE subfamily. Homodimer. Mg(2+) is required as a cofactor.

It catalyses the reaction orotidine 5'-phosphate + diphosphate = orotate + 5-phospho-alpha-D-ribose 1-diphosphate. It functions in the pathway pyrimidine metabolism; UMP biosynthesis via de novo pathway; UMP from orotate: step 1/2. Functionally, catalyzes the transfer of a ribosyl phosphate group from 5-phosphoribose 1-diphosphate to orotate, leading to the formation of orotidine monophosphate (OMP). This is Orotate phosphoribosyltransferase from Agrobacterium fabrum (strain C58 / ATCC 33970) (Agrobacterium tumefaciens (strain C58)).